Reading from the N-terminus, the 405-residue chain is Glucose-1-phosphate adenylyltransferase (405 aa).

Residues Tyr-99, Gly-164, 179-180 (EK), and Ser-197 contribute to the alpha-D-glucose 1-phosphate site.

This sequence belongs to the bacterial/plant glucose-1-phosphate adenylyltransferase family. As to quaternary structure, homotetramer.

The catalysed reaction is alpha-D-glucose 1-phosphate + ATP + H(+) = ADP-alpha-D-glucose + diphosphate. It functions in the pathway glycan biosynthesis; glycogen biosynthesis. In terms of biological role, involved in the biosynthesis of ADP-glucose, a building block required for the elongation reactions to produce glycogen. Catalyzes the reaction between ATP and alpha-D-glucose 1-phosphate (G1P) to produce pyrophosphate and ADP-Glc. This Corynebacterium aurimucosum (strain ATCC 700975 / DSM 44827 / CIP 107346 / CN-1) (Corynebacterium nigricans) protein is Glucose-1-phosphate adenylyltransferase.